A 492-amino-acid polypeptide reads, in one-letter code: Bifunctional protein GlmU (492 aa).

The interval 1–241 (MTFRGDTAVV…SALVAGVNDR (241 aa)) is pyrophosphorylase. Residues 12-15 (LAAG), K26, Q83, and 88-89 (GT) each bind UDP-N-acetyl-alpha-D-glucosamine. Position 114 (D114) interacts with Mg(2+). UDP-N-acetyl-alpha-D-glucosamine contacts are provided by G151, E166, N181, and N239. N239 is a Mg(2+) binding site. Residues 242-262 (VQLAQLGAELNRRIVAAHQMA) form a linker region. The segment at 263 to 492 (GVTVIDPATT…TPPPDADQTP (230 aa)) is N-acetyltransferase. UDP-N-acetyl-alpha-D-glucosamine-binding residues include R344 and K362. Catalysis depends on H374, which acts as the Proton acceptor. UDP-N-acetyl-alpha-D-glucosamine-binding residues include Y377 and N388. Acetyl-CoA is bound by residues A391, 397-398 (NY), and A434. Residues 451 to 492 (GGPQRNIEDWVQQKRPGTPSAEAARKASAEQSTPPPDADQTP) form a disordered region. The segment covering 483–492 (TPPPDADQTP) has biased composition (pro residues).

In the N-terminal section; belongs to the N-acetylglucosamine-1-phosphate uridyltransferase family. It in the C-terminal section; belongs to the transferase hexapeptide repeat family. In terms of assembly, homotrimer. Requires Mg(2+) as cofactor.

Its subcellular location is the cytoplasm. It carries out the reaction alpha-D-glucosamine 1-phosphate + acetyl-CoA = N-acetyl-alpha-D-glucosamine 1-phosphate + CoA + H(+). The catalysed reaction is N-acetyl-alpha-D-glucosamine 1-phosphate + UTP + H(+) = UDP-N-acetyl-alpha-D-glucosamine + diphosphate. Its pathway is nucleotide-sugar biosynthesis; UDP-N-acetyl-alpha-D-glucosamine biosynthesis; N-acetyl-alpha-D-glucosamine 1-phosphate from alpha-D-glucosamine 6-phosphate (route II): step 2/2. It functions in the pathway nucleotide-sugar biosynthesis; UDP-N-acetyl-alpha-D-glucosamine biosynthesis; UDP-N-acetyl-alpha-D-glucosamine from N-acetyl-alpha-D-glucosamine 1-phosphate: step 1/1. The protein operates within bacterial outer membrane biogenesis; LPS lipid A biosynthesis. Catalyzes the last two sequential reactions in the de novo biosynthetic pathway for UDP-N-acetylglucosamine (UDP-GlcNAc). The C-terminal domain catalyzes the transfer of acetyl group from acetyl coenzyme A to glucosamine-1-phosphate (GlcN-1-P) to produce N-acetylglucosamine-1-phosphate (GlcNAc-1-P), which is converted into UDP-GlcNAc by the transfer of uridine 5-monophosphate (from uridine 5-triphosphate), a reaction catalyzed by the N-terminal domain. This is Bifunctional protein GlmU from Mycobacterium marinum (strain ATCC BAA-535 / M).